The following is a 153-amino-acid chain: Nucleoside diphosphate kinase (153 aa).

Lys-13, Phe-61, Arg-89, Thr-95, Arg-106, and Asn-116 together coordinate ATP. A Phosphothreonine modification is found at Thr-95. The Pros-phosphohistidine intermediate role is filled by His-119.

This sequence belongs to the NDK family. In terms of assembly, homohexamer and homotetramer. Interacts with TOM40 preferentially in an unfolded, unphosphorylated form. Requires Mg(2+) as cofactor. In terms of processing, the N-terminus is blocked.

Its subcellular location is the cytoplasm. The protein localises to the mitochondrion intermembrane space. The catalysed reaction is a 2'-deoxyribonucleoside 5'-diphosphate + ATP = a 2'-deoxyribonucleoside 5'-triphosphate + ADP. The enzyme catalyses a ribonucleoside 5'-diphosphate + ATP = a ribonucleoside 5'-triphosphate + ADP. Major role in the synthesis of nucleoside triphosphates other than ATP. The ATP gamma phosphate is transferred to the NDP beta phosphate via a ping-pong mechanism, using a phosphorylated active-site intermediate. Required for repair of UV radiation- and etoposide-induced DNA damage. The chain is Nucleoside diphosphate kinase (YNK1) from Saccharomyces cerevisiae (strain ATCC 204508 / S288c) (Baker's yeast).